Here is a 224-residue protein sequence, read N- to C-terminus: Peroxiredoxin-6 (224 aa).

The Thioredoxin domain maps to 5-169 (LLLGDVAPNF…ILRVVISLQL (165 aa)). Positions 31–40 (DSWGILFSHP) are required and sufficient for targeting to lysosomes and lamellar bodies. Threonine 44 is subject to Phosphothreonine. Cysteine 47 acts as the Cysteine sulfenic acid (-SOH) intermediate; for peroxidase activity in catalysis. Lysine 63 bears the N6-acetyllysine mark. Phosphotyrosine is present on tyrosine 89. The active-site For phospholipase activity is the aspartate 140. Residue threonine 177 is modified to Phosphothreonine; by MAPK. N6-acetyllysine; alternate is present on lysine 209. Position 209 is an N6-succinyllysine; alternate (lysine 209).

It belongs to the peroxiredoxin family. Prx6 subfamily. In terms of assembly, homodimer. Interacts with GSTP1; mediates PRDX6 glutathionylation and regeneration. Interacts with APEX1. Interacts with STH. May interact with FAM168B. May interact with HTR2A. Irreversibly inactivated by overoxidation of Cys-47 to sulfinic acid (Cys-SO(2)H) and sulfonic acid (Cys-SO(3)H) forms upon oxidative stress. Post-translationally, phosphorylation at Thr-177 by MAP kinases increases the phospholipase activity of the enzyme. The phosphorylated form exhibits a greater lysophosphatidylcholine acyltransferase activity compared to the non-phosphorylated form.

Its subcellular location is the cytoplasm. The protein localises to the lysosome. The catalysed reaction is a hydroperoxide + 2 glutathione = an alcohol + glutathione disulfide + H2O. It catalyses the reaction a 1,2-diacyl-sn-glycero-3-phosphocholine + H2O = a 1-acyl-sn-glycero-3-phosphocholine + a fatty acid + H(+). The enzyme catalyses a 1-acyl-sn-glycero-3-phosphocholine + an acyl-CoA = a 1,2-diacyl-sn-glycero-3-phosphocholine + CoA. It carries out the reaction 1-hexadecanoyl-sn-glycero-3-phosphocholine + hexadecanoyl-CoA = 1,2-dihexadecanoyl-sn-glycero-3-phosphocholine + CoA. The catalysed reaction is 1,2-dihexadecanoyl-sn-glycero-3-phosphocholine + H2O = 1-hexadecanoyl-sn-glycero-3-phosphocholine + hexadecanoate + H(+). With respect to regulation, MJ33 or lithium;[(2R)-1-hexadecoxy-3-(2,2,2-trifluoroethoxy)propan-2-yl] methyl phosphate inhibits its phospholipase A2 activity. CI-976 or 2,2-Dimethyl-N-(2,4,6-trimethoxyphenyl)dodecanamide inhibits its lysophosphatidylcholine acyltransferase activity. Its function is as follows. Thiol-specific peroxidase that catalyzes the reduction of hydrogen peroxide and organic hydroperoxides to water and alcohols, respectively. Can reduce H(2)O(2) and short chain organic, fatty acid, and phospholipid hydroperoxides. Also has phospholipase activity, can therefore either reduce the oxidized sn-2 fatty acyl group of phospholipids (peroxidase activity) or hydrolyze the sn-2 ester bond of phospholipids (phospholipase activity). These activities are dependent on binding to phospholipids at acidic pH and to oxidized phospholipds at cytosolic pH. Plays a role in cell protection against oxidative stress by detoxifying peroxides and in phospholipid homeostasis. Exhibits acyl-CoA-dependent lysophospholipid acyltransferase which mediates the conversion of lysophosphatidylcholine (1-acyl-sn-glycero-3-phosphocholine or LPC) into phosphatidylcholine (1,2-diacyl-sn-glycero-3-phosphocholine or PC). Shows a clear preference for LPC as the lysophospholipid and for palmitoyl CoA as the fatty acyl substrate. This chain is Peroxiredoxin-6 (PRDX6), found in Homo sapiens (Human).